The primary structure comprises 338 residues: MLYDIARPFLFSLDAETAHEFTLAALNLAGRTLPAGKPEAADAVRVMGIDFPNRIGLAAGLDKNGEAIDGLARLGFGFIEIGTITPRPQPGNPRPRLFRLPEVRGIINRMGFNNHGVDTLVANVKAARFKGVLGINIGKNFDTPIENAADDYLACLDKVYPLASYVTVNISSPNTKNLRQLQGESELDDLLGRLKSAQQRLADQHGRYVPLTLKIAPDLEAAQITNIADALRRHRIDAVIATNTTISRDKVQGVRFAEQQGGLSGAPVFEASTAVVAQLATALGGELPIIAAGGVMDTRSARAKLEAGASLVQLYSGLIYRGPCLVRECVRATADFPR.

Residues 59–63 and T83 contribute to the FMN site; that span reads AGLDK. K63 is a binding site for substrate. Position 108–112 (108–112) interacts with substrate; sequence NRMGF. FMN-binding residues include N136 and N169. N169 provides a ligand contact to substrate. The active-site Nucleophile is S172. N174 is a substrate binding site. K214 and T242 together coordinate FMN. Residue 243–244 coordinates substrate; that stretch reads NT. FMN-binding positions include G265, G294, and 315–316; that span reads YS.

The protein belongs to the dihydroorotate dehydrogenase family. Type 2 subfamily. Monomer. Requires FMN as cofactor.

It is found in the cell membrane. It catalyses the reaction (S)-dihydroorotate + a quinone = orotate + a quinol. The protein operates within pyrimidine metabolism; UMP biosynthesis via de novo pathway; orotate from (S)-dihydroorotate (quinone route): step 1/1. In terms of biological role, catalyzes the conversion of dihydroorotate to orotate with quinone as electron acceptor. In Azoarcus sp. (strain BH72), this protein is Dihydroorotate dehydrogenase (quinone).